A 504-amino-acid polypeptide reads, in one-letter code: D-alanine--D-alanyl carrier protein ligase (504 aa).

Residue T152–S153 coordinates ATP. D197 lines the D-alanine pocket. N292–T297 serves as a coordination point for ATP. A D-alanine-binding site is contributed by V301. ATP is bound by residues D383, Y394 to R397, and K492. K492 is a D-alanine binding site.

This sequence belongs to the ATP-dependent AMP-binding enzyme family. DltA subfamily.

The protein localises to the cytoplasm. The enzyme catalyses holo-[D-alanyl-carrier protein] + D-alanine + ATP = D-alanyl-[D-alanyl-carrier protein] + AMP + diphosphate. It functions in the pathway cell wall biogenesis; lipoteichoic acid biosynthesis. Its function is as follows. Catalyzes the first step in the D-alanylation of lipoteichoic acid (LTA), the activation of D-alanine and its transfer onto the D-alanyl carrier protein (Dcp) DltC. In an ATP-dependent two-step reaction, forms a high energy D-alanyl-AMP intermediate, followed by transfer of the D-alanyl residue as a thiol ester to the phosphopantheinyl prosthetic group of the Dcp. D-alanylation of LTA plays an important role in modulating the properties of the cell wall in Gram-positive bacteria, influencing the net charge of the cell wall. The protein is D-alanine--D-alanyl carrier protein ligase of Bacillus cereus (strain AH187).